A 282-amino-acid polypeptide reads, in one-letter code: Armadillo repeat-containing protein 1 (282 aa).

Met1 is subject to N-acetylmethionine. Residues 39-81 (GCLPGLILFMDHPNPPVVHSALLALRYLAECRANREKMKGELG) form an ARM repeat. Thr137 is subject to Phosphothreonine. A phosphoserine mark is found at Ser189, Ser246, Ser260, and Ser267. Positions 239-261 (DYLPEDESPTKEQDKAVSRVGSH) are disordered. A compositionally biased stretch (basic and acidic residues) spans 246–255 (SPTKEQDKAV).

Interacts with mitochondrial contact site and cristae organizing system (MICOS) complex components IMMT/MIC60 and MICOS10/MIC10. Interacts with mitochondrial outer membrane sorting assembly machinery (SAM) complex components SAMM50 and MTX1.

The protein localises to the cytoplasm. It localises to the mitochondrion. Its subcellular location is the mitochondrion outer membrane. Functionally, in association with mitochondrial contact site and cristae organizing system (MICOS) complex components and mitochondrial outer membrane sorting assembly machinery (SAM) complex components may regulate mitochondrial dynamics playing a role in determining mitochondrial length, distribution and motility. This is Armadillo repeat-containing protein 1 (ARMC1) from Bos taurus (Bovine).